The chain runs to 827 residues: Penicillin-binding protein 1A (827 aa).

The Cytoplasmic portion of the chain corresponds to methionine 1–asparagine 18. The chain crosses the membrane as a helical; Signal-anchor for type II membrane protein span at residues valine 19–isoleucine 39. The Extracellular segment spans residues lysine 40–glutamine 827. Positions serine 57–alanine 229 are transglycosylase. Glutamate 96 serves as the catalytic Proton donor; for transglycosylase activity. A transpeptidase region spans residues alanine 357 to lysine 641. Serine 398 (acyl-ester intermediate; for transpeptidase activity) is an active-site residue. Positions glycine 755–glutamine 827 are disordered. Positions threonine 760–serine 790 are enriched in basic and acidic residues. Positions glutamine 791–asparagine 817 are enriched in low complexity. Over residues glutamine 818 to glutamine 827 the composition is skewed to basic and acidic residues.

It in the N-terminal section; belongs to the glycosyltransferase 51 family. This sequence in the C-terminal section; belongs to the transpeptidase family.

It is found in the cell membrane. It carries out the reaction [GlcNAc-(1-&gt;4)-Mur2Ac(oyl-L-Ala-gamma-D-Glu-L-Lys-D-Ala-D-Ala)](n)-di-trans,octa-cis-undecaprenyl diphosphate + beta-D-GlcNAc-(1-&gt;4)-Mur2Ac(oyl-L-Ala-gamma-D-Glu-L-Lys-D-Ala-D-Ala)-di-trans,octa-cis-undecaprenyl diphosphate = [GlcNAc-(1-&gt;4)-Mur2Ac(oyl-L-Ala-gamma-D-Glu-L-Lys-D-Ala-D-Ala)](n+1)-di-trans,octa-cis-undecaprenyl diphosphate + di-trans,octa-cis-undecaprenyl diphosphate + H(+). The catalysed reaction is Preferential cleavage: (Ac)2-L-Lys-D-Ala-|-D-Ala. Also transpeptidation of peptidyl-alanyl moieties that are N-acyl substituents of D-alanine.. It functions in the pathway cell wall biogenesis; peptidoglycan biosynthesis. Its function is as follows. Cell wall formation. Synthesis of cross-linked peptidoglycan from the lipid intermediates. The enzyme has a penicillin-insensitive transglycosylase N-terminal domain (formation of linear glycan strands) and a penicillin-sensitive transpeptidase C-terminal domain (cross-linking of the peptide subunits). This is Penicillin-binding protein 1A (pbpA) from Clostridium botulinum (strain Langeland / NCTC 10281 / Type F).